Here is a 30-residue protein sequence, read N- to C-terminus: Cyclotide vdif-A (30 aa).

The cyclopeptide (Gly-Asn) cross-link spans 1–30; it reads GIPCGESCVFIPCISSVVGCSCKSKVCYRN. Disulfide bonds link cysteine 4–cysteine 20, cysteine 8–cysteine 22, and cysteine 13–cysteine 27.

It belongs to the cyclotide family. Bracelet subfamily. This is a cyclic peptide.

In terms of biological role, probably participates in a plant defense mechanism. The protein is Cyclotide vdif-A of Viola diffusa.